We begin with the raw amino-acid sequence, 946 residues long: Calcium-transporting ATPase type 2C member 2 (946 aa).

Topologically, residues 1 to 106 (MVEGRVSEFL…DNSEPVWKKY (106 aa)) are cytoplasmic. The segment at 71 to 95 (VDLHTGLSEFSVTQRRLAHGWNEFV) is interaction with ORAI1. A helical transmembrane segment spans residues 107–127 (LDQFKNPLILLLLGSALVSVL). Topologically, residues 128 to 129 (TK) are extracellular. A helical membrane pass occupies residues 130–150 (EYEDAVSIATAVLVVVTVAFI). Over 151-231 (QEYRSEKSLE…EAEPCSKTDS (81 aa)) the chain is Cytoplasmic. Residues 232–252 (PLTGGGDLTTLSNIVFMGTLV) traverse the membrane as a helical segment. At 253 to 293 (QYGRGQGVVIGTGESSQFGEVFKMMQAEETPKTPLQKSMDR) the chain is on the extracellular side. Thr264 is modified (phosphothreonine). Phosphoserine occurs at positions 267 and 268. The helical transmembrane segment at 294–314 (LGKQLTLFSFGIIGLIMLIGW) threads the bilayer. The Cytoplasmic segment spans residues 315-331 (SQGKQLLSMFTIGVSLA). Positions 332, 333, 335, and 337 each coordinate Ca(2+). The helical transmembrane segment at 332–352 (VAAIPEGLPIVVMVTLVLGVL) threads the bilayer. At 353–750 (RMAKKRVIVK…ISALSLITLS (398 aa)) the chain is on the extracellular side. Catalysis depends on Asp379, which acts as the 4-aspartylphosphate intermediate. Residues Asp674 and Asp678 each contribute to the Mg(2+) site. A helical membrane pass occupies residues 751–771 (TVFNLPSPLNAMQILWINIIM). Ca(2+)-binding residues include Asn768 and Asp772. Residues 772–804 (DGPPAQSLGVEPVDKDAFRQPPRSVRDTILSRA) are Cytoplasmic-facing. A helical transmembrane segment spans residues 805–825 (LILKILMSAAIIISGTLFIFW). Residues 826–837 (KEMPEDRASTPR) lie on the Extracellular side of the membrane. A helical membrane pass occupies residues 838 to 855 (TTTMTFTCFVFFDLFNAL). Over 856-874 (TCRSQTKLIFEIGFLRNHM) the chain is Cytoplasmic. The helical transmembrane segment at 875–895 (FLYSVLGSILGQLAVIYIPPL) threads the bilayer. The Extracellular portion of the chain corresponds to 896 to 905 (QRVFQTENLG). The chain crosses the membrane as a helical span at residues 906 to 926 (ALDLLFLTGLASSVFILSELL). Residues 927–946 (KLCEKYCCSPKRVQMHPEDV) lie on the Cytoplasmic side of the membrane.

It belongs to the cation transport ATPase (P-type) (TC 3.A.3) family. Type IIA subfamily. In terms of assembly, interacts (via N-terminus) with ORAI1 (via N- and C-termini); this interaction regulates Ca(2+) influx at the plasma membrane. As to expression, highly expressed in the gastrointestinal and respiratory tracts, prostate, thyroid, salivary, and mammary glands. Expressed in colon epithelial cells (at protein level). Expressed in brain and testis (at protein level).

It is found in the golgi apparatus. It localises to the trans-Golgi network membrane. Its subcellular location is the cell membrane. The protein localises to the basolateral cell membrane. The catalysed reaction is Ca(2+)(in) + ATP + H2O = Ca(2+)(out) + ADP + phosphate + H(+). It catalyses the reaction Mn(2+)(in) + ATP + H2O = Mn(2+)(out) + ADP + phosphate + H(+). ATP-driven pump that supplies the Golgi apparatus with Ca(2+) and Mn(2+) ions, both essential cofactors for processing and trafficking of newly synthesized proteins in the secretory pathway. Within a catalytic cycle, acquires Ca(2+) or Mn(2+) ions on the cytoplasmic side of the membrane and delivers them to the lumenal side. The transfer of ions across the membrane is coupled to ATP hydrolysis and is associated with a transient phosphorylation that shifts the pump conformation from inward-facing to outward-facing state. Induces Ca(2+) influx independently of its ATP-driven pump function. At the basolateral membrane of mammary epithelial cells, interacts with Ca(2+) channel ORAI1 and mediates Ca(2+) entry independently of the Ca(2+) content of endoplasmic reticulum or Golgi stores. May facilitate transepithelial transport of large quantities of Ca(2+) for milk secretion via activation of Ca(2+) influx channels at the plasma membrane and active Ca(2+) transport at the Golgi apparatus. In Homo sapiens (Human), this protein is Calcium-transporting ATPase type 2C member 2.